The sequence spans 205 residues: Protein-L-isoaspartate O-methyltransferase (205 aa).

Residue Ser-56 is part of the active site.

This sequence belongs to the methyltransferase superfamily. L-isoaspartyl/D-aspartyl protein methyltransferase family.

The protein localises to the cytoplasm. It catalyses the reaction [protein]-L-isoaspartate + S-adenosyl-L-methionine = [protein]-L-isoaspartate alpha-methyl ester + S-adenosyl-L-homocysteine. Functionally, catalyzes the methyl esterification of L-isoaspartyl residues in peptides and proteins that result from spontaneous decomposition of normal L-aspartyl and L-asparaginyl residues. It plays a role in the repair and/or degradation of damaged proteins. This chain is Protein-L-isoaspartate O-methyltransferase, found in Pyrobaculum aerophilum (strain ATCC 51768 / DSM 7523 / JCM 9630 / CIP 104966 / NBRC 100827 / IM2).